The primary structure comprises 137 residues: Large-conductance mechanosensitive channel (137 aa).

The Cytoplasmic segment spans residues 1-16 (MSIIKEFREFAMRGNV). The helical transmembrane segment at 17-45 (VDLAVGVIIGALFGKIVSSLVSDIIMPPL) threads the bilayer. Topologically, residues 46–74 (GLLIGGVDFKQFALFLRNAQGGIPAVVMN) are periplasmic. The chain crosses the membrane as a helical span at residues 75 to 94 (YGAFIQNIFDFIIVAFAIFI). Topologically, residues 95 to 137 (AIKLMNKMRCKQEDTPAAPPKPSAEEKLLAEIRDLLKEQQTRQ) are cytoplasmic.

This sequence belongs to the MscL family. As to quaternary structure, homopentamer.

It localises to the cell inner membrane. Channel that opens in response to stretch forces in the membrane lipid bilayer. Forms a nonselective ion channel with a conductance of about 4 nanosiemens. May participate in the regulation of osmotic pressure changes within the cell. This Pectobacterium carotovorum (Erwinia carotovora) protein is Large-conductance mechanosensitive channel.